Here is a 575-residue protein sequence, read N- to C-terminus: Flagellin B (575 aa).

It belongs to the bacterial flagellin family. In terms of assembly, heteromer of flaA and flaB.

It is found in the secreted. It localises to the bacterial flagellum. In terms of biological role, flagellin is the subunit protein which polymerizes to form the filaments of bacterial flagella. This is Flagellin B (flaB) from Campylobacter jejuni.